Reading from the N-terminus, the 187-residue chain is Alpha-D-galactose-binding lectin (187 aa).

A signal peptide spans 1 to 37 (MTFAKQSCFNSIILLSIATSYFKIGHKISELGNRIEK). The residue at position 39 (Thr-39) is an N-acetylthreonine. Residues 53–56 (HPKG), Asp-64, 72–76 (DIHER), His-101, Gly-104, Glu-112, 120–122 (DRH), His-145, Gly-148, Glu-156, and 164–166 (DKH) each bind N-acetyl-alpha-D-galactosamine.

Homodimer. In terms of tissue distribution, highest expression in the posterior part of the mantle. Highly expressed in gills and to a lesser extent in mid mantle and anterior muscle. Lowest expression in digestive gland and posterior adductor muscle. Scarcely detectable in hemocytes.

Agglutination of E.coli is inhibited by alpha-galactoside melibiose, but not by beta-galactoside lactose. Its function is as follows. Alpha-D-galactose-binding lectin. Binds D-GalNAc, but not glucose or its derivatives. Has hemagglutinating activity towards rabbit erythrocytes. Agglutinates bacteria. Has bacteriostatic activity on both Gram-positive and Gram-negative bacteria including B.subtilis, S.aureus, E.coli and V.parahaemolyticus, respectively. Has a dose-dependent cytotoxic effect on the human globotriaosylceramide (Gb3)-expressing Epstein-Barr virus (EBV)-positive Burkitt's lymphoma (Raji) cell line. Has dose-dependent cytotoxic effect on another Burkitt's lymphoma (Ramos) cell line, which does not possess the EBV genome, but also expresses Gb3. Binds to Gb3 in these cells leading to phosphorylation of MEK1/2, ERK1/2, JNK and p38 kinase, activation of caspase-9/3 and to expression of p21 and tumor necrosis factor (TNF)-alpha. No cytotoxic effect on the human chronic myelogenous leukemia (K-562) cell line, which does not express Gb3. May be involved in innate immunity acting as an antibacterial or antifungal agent. May be a pattern recognition receptor (PRR) involved in recognition of glycans found on parasitic or symbiotic microorganisms. This chain is Alpha-D-galactose-binding lectin, found in Mytilus galloprovincialis (Mediterranean mussel).